Here is a 495-residue protein sequence, read N- to C-terminus: Phosphomethylpyrimidine synthase (495 aa).

Substrate-binding positions include Asn125, Met154, Tyr183, His219, 239 to 241 (SRG), 280 to 283 (DGLR), and Glu319. His323 serves as a coordination point for Zn(2+). Tyr346 is a binding site for substrate. His387 is a binding site for Zn(2+). Cys467, Cys470, and Cys475 together coordinate [4Fe-4S] cluster.

Belongs to the ThiC family. It depends on [4Fe-4S] cluster as a cofactor.

It catalyses the reaction 5-amino-1-(5-phospho-beta-D-ribosyl)imidazole + S-adenosyl-L-methionine = 4-amino-2-methyl-5-(phosphooxymethyl)pyrimidine + CO + 5'-deoxyadenosine + formate + L-methionine + 3 H(+). The protein operates within cofactor biosynthesis; thiamine diphosphate biosynthesis. Catalyzes the synthesis of the hydroxymethylpyrimidine phosphate (HMP-P) moiety of thiamine from aminoimidazole ribotide (AIR) in a radical S-adenosyl-L-methionine (SAM)-dependent reaction. The protein is Phosphomethylpyrimidine synthase of Leptospira interrogans serogroup Icterohaemorrhagiae serovar copenhageni (strain Fiocruz L1-130).